The chain runs to 223 residues: tRNA (guanine-N(7)-)-methyltransferase (223 aa).

S-adenosyl-L-methionine-binding residues include E45, E70, and D125. D125 is an active-site residue. Substrate contacts are provided by residues K129, D161, and 201–204; that span reads TEYE.

This sequence belongs to the class I-like SAM-binding methyltransferase superfamily. TrmB family.

It carries out the reaction guanosine(46) in tRNA + S-adenosyl-L-methionine = N(7)-methylguanosine(46) in tRNA + S-adenosyl-L-homocysteine. Its pathway is tRNA modification; N(7)-methylguanine-tRNA biosynthesis. In terms of biological role, catalyzes the formation of N(7)-methylguanine at position 46 (m7G46) in tRNA. The chain is tRNA (guanine-N(7)-)-methyltransferase from Mesoplasma florum (strain ATCC 33453 / NBRC 100688 / NCTC 11704 / L1) (Acholeplasma florum).